The primary structure comprises 781 residues: ATP-dependent RNA helicase rok1 (781 aa).

Disordered regions lie at residues 7–108 (LSRG…KPKL) and 134–177 (QDEA…IYPQ). Residues 48-57 (KRGKKRKRKG) show a composition bias toward basic residues. Residues 66-75 (SGDEDDDASD) are compositionally biased toward acidic residues. Basic and acidic residues-rich tracts occupy residues 84–108 (TPEE…KPKL) and 139–173 (TEEK…DKKQ). Positions 184 to 212 (ELKYTYGIHPVLADNITRQGFRVPTEVQM) match the Q motif motif. Positions 233-487 (DVKVEKGIDF…TKHIDKRAKR (255 aa)) constitute a Helicase ATP-binding domain. 246–253 (APTGSGKT) contributes to the ATP binding site. The tract at residues 323-386 (ESNEQEETEQ…SRAKGDQKFK (64 aa)) is disordered. The segment covering 339–369 (QDSDSDSEAESEPEEVMKIDEEEEEEEESDS) has biased composition (acidic residues). Basic and acidic residues predominate over residues 370–386 (DAEKKTESRAKGDQKFK). Residues 434–437 (DEAD) carry the DEAD box motif. The 163-residue stretch at 527 to 689 (ALRQLLHPVS…GKDIDEKDTV (163 aa)) folds into the Helicase C-terminal domain. The segment at 718–781 (RGVESRRTGG…KAEEEWTGLD (64 aa)) is disordered. The segment covering 736 to 752 (SWERRRENNRREAIEAS) has biased composition (basic and acidic residues).

The protein belongs to the DEAD box helicase family. DDX52/ROK1 subfamily. Interacts with the U3 snoRNA and is associated with the 90S and 40S pre-ribosomes.

The protein resides in the nucleus. It is found in the nucleolus. The enzyme catalyses ATP + H2O = ADP + phosphate + H(+). Functionally, ATP-dependent RNA helicase involved in 40S ribosomal subunit biogenesis. Required for the processing and cleavage of 35S pre-rRNA at sites A0, A1, and A2, leading to mature 18S rRNA. The polypeptide is ATP-dependent RNA helicase rok1 (drh-16) (Neurospora crassa (strain ATCC 24698 / 74-OR23-1A / CBS 708.71 / DSM 1257 / FGSC 987)).